The following is a 144-amino-acid chain: Interferon-induced transmembrane protein 2 (144 aa).

An N-acetylmethionine modification is found at methionine 1. The Cytoplasmic segment spans residues 1 to 56 (MSHNSQAFLSTNAGLPPSYETIKEEYGVTELGEPSNSAVVRTTVINMPREVSVPDH). At tyrosine 19 the chain carries Phosphotyrosine. An intramembrane region (helical) is located at residues 57-77 (VVWSLFNTLFFNACCLGFVAY). Residues cysteine 70, cysteine 71, and cysteine 104 are each lipidated (S-palmitoyl cysteine). At 78–110 (AYSVKSRDRKMVGDVVGAQAYASTAKCLNISSL) the chain is on the cytoplasmic side. A helical transmembrane segment spans residues 111 to 131 (IFSILMVIICIIIFSTTSVVV). Residues 132 to 144 (FQSFAQRTPHSGF) are Extracellular-facing.

Belongs to the CD225/Dispanin family. In terms of assembly, interacts with CD81. Post-translationally, palmitoylation on membrane-proximal cysteines controls clustering in membrane compartments and antiviral activity. In terms of processing, phosphorylation at Tyr-19 is required for endosomal and lysosomal location. In terms of tissue distribution, predominantly expressed in nascent primordial germ cells, as well as in gonadal germ cells.

The protein resides in the cell membrane. The protein localises to the lysosome membrane. It is found in the late endosome membrane. In terms of biological role, IFN-induced antiviral protein which inhibits the entry of viruses to the host cell cytoplasm, permitting endocytosis, but preventing subsequent viral fusion and release of viral contents into the cytosol. Active against multiple viruses, including influenza A virus, SARS coronavirus (SARS-CoV), Marburg virus (MARV) and Ebola virus (EBOV), Dengue virus (DNV) and West Nile virus (WNV). Can inhibit: influenza virus hemagglutinin protein-mediated viral entry, MARV and EBOV GP1,2-mediated viral entry and SARS-CoV S protein-mediated viral entry. Induces cell cycle arrest and mediates apoptosis by caspase activation and in p53-independent manner. This chain is Interferon-induced transmembrane protein 2 (Ifitm2), found in Mus musculus (Mouse).